Here is a 423-residue protein sequence, read N- to C-terminus: tRNA(Ile)-lysidine synthase (423 aa).

ATP is bound at residue Ser-43 to Ser-48.

Belongs to the tRNA(Ile)-lysidine synthase family.

Its subcellular location is the cytoplasm. It catalyses the reaction cytidine(34) in tRNA(Ile2) + L-lysine + ATP = lysidine(34) in tRNA(Ile2) + AMP + diphosphate + H(+). Functionally, ligates lysine onto the cytidine present at position 34 of the AUA codon-specific tRNA(Ile) that contains the anticodon CAU, in an ATP-dependent manner. Cytidine is converted to lysidine, thus changing the amino acid specificity of the tRNA from methionine to isoleucine. In Helicobacter hepaticus (strain ATCC 51449 / 3B1), this protein is tRNA(Ile)-lysidine synthase.